A 329-amino-acid polypeptide reads, in one-letter code: Calponin-3 (329 aa).

Lysine 23 carries the post-translational modification N6-acetyllysine. A Calponin-homology (CH) domain is found at 26 to 130 (HQAEEDLRNW…TLVALAGLAK (105 aa)). Position 158 is an N6-methyllysine (lysine 158). Calponin-like repeat units follow at residues 164 to 189 (IGLQ…RHLY), 204 to 229 (ISLQ…RDIY), and 243 to 268 (ISLQ…RQVY). The segment at 280 to 329 (VIHNGSQGTGTNGSEISDSDYQAEYPDEYHGEYQDDYPRDYQYGDQGIDY) is disordered. A compositionally biased stretch (basic and acidic residues) spans 306–318 (DEYHGEYQDDYPR).

This sequence belongs to the calponin family.

Thin filament-associated protein that is implicated in the regulation and modulation of smooth muscle contraction. It is capable of binding to actin, calmodulin and tropomyosin. The interaction of calponin with actin inhibits the actomyosin Mg-ATPase activity. This chain is Calponin-3 (CNN3), found in Bos taurus (Bovine).